We begin with the raw amino-acid sequence, 187 residues long: Peptidyl-tRNA hydrolase (187 aa).

Position 14 (Y14) interacts with tRNA. H19 serves as the catalytic Proton acceptor. Residues Y60, N62, and N108 each coordinate tRNA.

Belongs to the PTH family. In terms of assembly, monomer.

Its subcellular location is the cytoplasm. The enzyme catalyses an N-acyl-L-alpha-aminoacyl-tRNA + H2O = an N-acyl-L-amino acid + a tRNA + H(+). Its function is as follows. Hydrolyzes ribosome-free peptidyl-tRNAs (with 1 or more amino acids incorporated), which drop off the ribosome during protein synthesis, or as a result of ribosome stalling. Functionally, catalyzes the release of premature peptidyl moieties from peptidyl-tRNA molecules trapped in stalled 50S ribosomal subunits, and thus maintains levels of free tRNAs and 50S ribosomes. This Mycoplasmopsis synoviae (strain 53) (Mycoplasma synoviae) protein is Peptidyl-tRNA hydrolase.